A 118-amino-acid chain; its full sequence is Large ribosomal subunit protein bL20 (118 aa).

Belongs to the bacterial ribosomal protein bL20 family.

Its function is as follows. Binds directly to 23S ribosomal RNA and is necessary for the in vitro assembly process of the 50S ribosomal subunit. It is not involved in the protein synthesizing functions of that subunit. The chain is Large ribosomal subunit protein bL20 from Shigella dysenteriae serotype 1 (strain Sd197).